We begin with the raw amino-acid sequence, 98 residues long: NADH-ubiquinone oxidoreductase chain 4L (98 aa).

Helical transmembrane passes span 1–21 (MPYIYMNITLAFVISLIGTLM), 29–49 (SLLCLEGMLLSLFTLNALLSL), and 61–81 (LILLVFAACEAAVGLALLVMI).

It belongs to the complex I subunit 4L family. Core subunit of respiratory chain NADH dehydrogenase (Complex I) which is composed of 45 different subunits.

Its subcellular location is the mitochondrion inner membrane. It catalyses the reaction a ubiquinone + NADH + 5 H(+)(in) = a ubiquinol + NAD(+) + 4 H(+)(out). Its function is as follows. Core subunit of the mitochondrial membrane respiratory chain NADH dehydrogenase (Complex I) which catalyzes electron transfer from NADH through the respiratory chain, using ubiquinone as an electron acceptor. Part of the enzyme membrane arm which is embedded in the lipid bilayer and involved in proton translocation. This Elephas maximus (Indian elephant) protein is NADH-ubiquinone oxidoreductase chain 4L (MT-ND4L).